A 253-amino-acid chain; its full sequence is Electron transfer flavoprotein subunit beta, mitochondrial (253 aa).

The protein belongs to the ETF beta-subunit/FixA family. Heterodimer of an alpha and a beta subunit. The cofactor is FAD. It depends on AMP as a cofactor.

It is found in the mitochondrion matrix. Functionally, the electron transfer flavoprotein serves as a specific electron acceptor for several dehydrogenases, including five acyl-CoA dehydrogenases, glutaryl-CoA and sarcosine dehydrogenase. It transfers the electrons to the main mitochondrial respiratory chain via ETF-ubiquinone oxidoreductase (ETF dehydrogenase). This chain is Electron transfer flavoprotein subunit beta, mitochondrial (ETFB), found in Oryza sativa subsp. japonica (Rice).